Here is a 269-residue protein sequence, read N- to C-terminus: tRNA (guanine-N(1)-)-methyltransferase (269 aa).

S-adenosyl-L-methionine contacts are provided by residues G115 and 139–144 (LGDYVL).

The protein belongs to the RNA methyltransferase TrmD family. In terms of assembly, homodimer.

The protein resides in the cytoplasm. The catalysed reaction is guanosine(37) in tRNA + S-adenosyl-L-methionine = N(1)-methylguanosine(37) in tRNA + S-adenosyl-L-homocysteine + H(+). Functionally, specifically methylates guanosine-37 in various tRNAs. The protein is tRNA (guanine-N(1)-)-methyltransferase of Pseudarthrobacter chlorophenolicus (strain ATCC 700700 / DSM 12829 / CIP 107037 / JCM 12360 / KCTC 9906 / NCIMB 13794 / A6) (Arthrobacter chlorophenolicus).